We begin with the raw amino-acid sequence, 316 residues long: Acetyl-coenzyme A carboxylase carboxyl transferase subunit beta (316 aa).

The region spanning 39–308 (LWHKCSKCGV…TPPMVLWETM (270 aa)) is the CoA carboxyltransferase N-terminal domain. Zn(2+) is bound by residues Cys-43, Cys-46, Cys-62, and Cys-65. The segment at 43 to 65 (CSKCGVLTYTKDLRANQMVCVEC) adopts a C4-type zinc-finger fold.

This sequence belongs to the AccD/PCCB family. Acetyl-CoA carboxylase is a heterohexamer composed of biotin carboxyl carrier protein (AccB), biotin carboxylase (AccC) and two subunits each of ACCase subunit alpha (AccA) and ACCase subunit beta (AccD). Zn(2+) is required as a cofactor.

It localises to the cytoplasm. It carries out the reaction N(6)-carboxybiotinyl-L-lysyl-[protein] + acetyl-CoA = N(6)-biotinyl-L-lysyl-[protein] + malonyl-CoA. Its pathway is lipid metabolism; malonyl-CoA biosynthesis; malonyl-CoA from acetyl-CoA: step 1/1. Component of the acetyl coenzyme A carboxylase (ACC) complex. Biotin carboxylase (BC) catalyzes the carboxylation of biotin on its carrier protein (BCCP) and then the CO(2) group is transferred by the transcarboxylase to acetyl-CoA to form malonyl-CoA. In Trichormus variabilis (strain ATCC 29413 / PCC 7937) (Anabaena variabilis), this protein is Acetyl-coenzyme A carboxylase carboxyl transferase subunit beta.